A 390-amino-acid polypeptide reads, in one-letter code: Altered inheritance of mitochondria protein 6 (390 aa).

Positions 1–26 are cleaved as a signal peptide; sequence MLGLKGCLTILIGYVIAVCALFSSRG.

This sequence belongs to the AIM6 family.

The sequence is that of Altered inheritance of mitochondria protein 6 (AIM6) from Saccharomyces cerevisiae (strain RM11-1a) (Baker's yeast).